A 380-amino-acid polypeptide reads, in one-letter code: Protein RecA (380 aa).

Residue 65–72 coordinates ATP; that stretch reads GPESSGKT. The tract at residues 329-380 is disordered; it reads DATGEETSETDDQAKEAKDKGTAKNGSKGQSKSTKATPAETALDLGDQPTEK. The segment covering 340-350 has biased composition (basic and acidic residues); it reads DQAKEAKDKGT. A compositionally biased stretch (polar residues) spans 352–364; it reads KNGSKGQSKSTKA.

This sequence belongs to the RecA family.

Its subcellular location is the cytoplasm. Can catalyze the hydrolysis of ATP in the presence of single-stranded DNA, the ATP-dependent uptake of single-stranded DNA by duplex DNA, and the ATP-dependent hybridization of homologous single-stranded DNAs. It interacts with LexA causing its activation and leading to its autocatalytic cleavage. This chain is Protein RecA, found in Lactiplantibacillus plantarum (strain ATCC BAA-793 / NCIMB 8826 / WCFS1) (Lactobacillus plantarum).